The sequence spans 686 residues: Band 4.1-like protein 4A (686 aa).

An FERM domain is found at 11 to 299 (FYCEVLLLDE…EHHTFFRMPD (289 aa)). Ser304 carries the post-translational modification Phosphoserine. Composition is skewed to polar residues over residues 332–346 (DLSI…NVVR) and 357–382 (AQTQ…NEGT). The disordered stretch occupies residues 332-669 (DLSIQLPRPN…LSTINPAGKP (338 aa)). A phosphoserine mark is found at Ser389, Ser393, and Ser402. 2 stretches are compositionally biased toward polar residues: residues 418–428 (GPQSGLYNSSS) and 442–455 (RNLS…SSQL). Positions 479–489 (RCNTSSGSESE) are enriched in low complexity. Basic and acidic residues-rich tracts occupy residues 518-527 (VLRRQKEKNQ) and 547-561 (QAKE…KELV). Positions 588–601 (IRHSHSPRSYRQYR) are enriched in basic residues. Residues 648 to 658 (GSKDSLIEEKS) are compositionally biased toward basic and acidic residues.

In terms of tissue distribution, brain, heart, lung, liver and spleen. Not detected in thymus and kidney.

The protein localises to the cytoplasm. Its subcellular location is the cytoskeleton. The protein is Band 4.1-like protein 4A of Mus musculus (Mouse).